Reading from the N-terminus, the 1070-residue chain is DNA-directed RNA polymerase subunit beta (1070 aa).

The protein belongs to the RNA polymerase beta chain family. In terms of assembly, in plastids the minimal PEP RNA polymerase catalytic core is composed of four subunits: alpha, beta, beta', and beta''. When a (nuclear-encoded) sigma factor is associated with the core the holoenzyme is formed, which can initiate transcription.

The protein resides in the plastid. The protein localises to the chloroplast. The catalysed reaction is RNA(n) + a ribonucleoside 5'-triphosphate = RNA(n+1) + diphosphate. Its function is as follows. DNA-dependent RNA polymerase catalyzes the transcription of DNA into RNA using the four ribonucleoside triphosphates as substrates. This is DNA-directed RNA polymerase subunit beta from Liriodendron tulipifera (Tuliptree).